We begin with the raw amino-acid sequence, 149 residues long: Histidine-containing phosphotransfer protein 2 (149 aa).

Residues 39-144 (TPGFVSEVVT…LQLEQQIQAY (106 aa)) form the HPt domain. Histidine 80 carries the phosphohistidine modification.

In terms of processing, two-component system major event consists of a His-to-Asp phosphorelay between a sensor histidine kinase (HK) and a response regulator (RR). In plants, the His-to-Asp phosphorelay involves an additional intermediate named Histidine-containing phosphotransfer protein (HPt). This multistep phosphorelay consists of a His-Asp-His-Asp sequential transfer of a phosphate group between first a His and an Asp of the HK protein, followed by the transfer to a conserved His of the HPt protein and finally the transfer to an Asp in the receiver domain of the RR protein. Widely expressed.

Its subcellular location is the cytoplasm. It localises to the cytosol. The protein localises to the nucleus. Its function is as follows. Functions as a two-component phosphorelay mediators between cytokinin sensor histidine kinases and response regulators (B-type ARRs). Plays an important role in propagating cytokinin signal transduction through the multistep His-to-Asp phosphorelay. Functions as a positive regulator of the cytokinin signaling pathway. May play a regulatory role in salt and drought tolerance during plant development. This chain is Histidine-containing phosphotransfer protein 2, found in Oryza sativa subsp. japonica (Rice).